A 289-amino-acid polypeptide reads, in one-letter code: Elongation factor Ts (289 aa).

The involved in Mg(2+) ion dislocation from EF-Tu stretch occupies residues 80–83 (TDFV).

Belongs to the EF-Ts family.

It localises to the cytoplasm. Associates with the EF-Tu.GDP complex and induces the exchange of GDP to GTP. It remains bound to the aminoacyl-tRNA.EF-Tu.GTP complex up to the GTP hydrolysis stage on the ribosome. This chain is Elongation factor Ts, found in Francisella tularensis subsp. holarctica (strain LVS).